A 602-amino-acid chain; its full sequence is Aspartate--tRNA(Asp/Asn) ligase (602 aa).

Glu176 provides a ligand contact to L-aspartate. Positions 200-203 (QQFK) are aspartate. Residues Arg222 and His452 each coordinate L-aspartate. 222-224 (RDE) lines the ATP pocket. Residue Glu490 participates in ATP binding. Residue Arg497 coordinates L-aspartate. 542–545 (GIDR) lines the ATP pocket.

This sequence belongs to the class-II aminoacyl-tRNA synthetase family. Type 1 subfamily. Homodimer.

It is found in the cytoplasm. It carries out the reaction tRNA(Asx) + L-aspartate + ATP = L-aspartyl-tRNA(Asx) + AMP + diphosphate. In terms of biological role, aspartyl-tRNA synthetase with relaxed tRNA specificity since it is able to aspartylate not only its cognate tRNA(Asp) but also tRNA(Asn). Reaction proceeds in two steps: L-aspartate is first activated by ATP to form Asp-AMP and then transferred to the acceptor end of tRNA(Asp/Asn). This chain is Aspartate--tRNA(Asp/Asn) ligase, found in Rickettsia africae (strain ESF-5).